A 610-amino-acid chain; its full sequence is Butyryl-CoA dehydrogenase Swol_2052 (610 aa).

Glu451 (proton acceptor) is an active-site residue.

The protein belongs to the acyl-CoA dehydrogenase family. Requires FAD as cofactor.

Its subcellular location is the cytoplasm. It catalyses the reaction butanoyl-CoA + oxidized [electron-transfer flavoprotein] + H(+) = (2E)-butenoyl-CoA + reduced [electron-transfer flavoprotein]. The catalysed reaction is a short-chain 2,3-saturated fatty acyl-CoA + oxidized [electron-transfer flavoprotein] + H(+) = a short-chain (2E)-enoyl-CoA + reduced [electron-transfer flavoprotein]. Its pathway is lipid metabolism; butanoate metabolism. Its function is as follows. Involved in syntrophic growth of S.wolfei with butyrate, as part of the butyrate oxidation pathway. Catalyzes the oxidation of butanoyl-CoA to crotonyl-CoA. Probably passes the electrons released by this reaction on to electron-transfer flavoproteins (EtfAB) to finally generate hydrogen and/or formate. The protein is Butyryl-CoA dehydrogenase Swol_2052 of Syntrophomonas wolfei subsp. wolfei (strain DSM 2245B / Goettingen).